The sequence spans 142 residues: Large ribosomal subunit protein uL11 (142 aa).

The protein belongs to the universal ribosomal protein uL11 family. As to quaternary structure, part of the ribosomal stalk of the 50S ribosomal subunit. Interacts with L10 and the large rRNA to form the base of the stalk. L10 forms an elongated spine to which L12 dimers bind in a sequential fashion forming a multimeric L10(L12)X complex. One or more lysine residues are methylated.

Forms part of the ribosomal stalk which helps the ribosome interact with GTP-bound translation factors. In Idiomarina loihiensis (strain ATCC BAA-735 / DSM 15497 / L2-TR), this protein is Large ribosomal subunit protein uL11.